The sequence spans 1158 residues: ATP-dependent helicase/deoxyribonuclease subunit B (1158 aa).

The 275-residue stretch at 1-275 folds into the UvrD-like helicase ATP-binding domain; sequence MTLHAYLGRA…QYFNQLYRFN (275 aa). An ATP-binding site is contributed by 8-15; that stretch reads GRAGTGKS. Residues 269 to 583 form the UvrD-like helicase C-terminal domain; sequence NQLYRFNNQD…SIGTMDLAKV (315 aa). Residues Cys-784, Cys-1112, Cys-1115, and Cys-1121 each contribute to the [4Fe-4S] cluster site.

This sequence belongs to the helicase family. AddB/RexB type 1 subfamily. In terms of assembly, heterodimer of AddA and AddB. The cofactor is Mg(2+). Requires [4Fe-4S] cluster as cofactor.

The heterodimer acts as both an ATP-dependent DNA helicase and an ATP-dependent, dual-direction single-stranded exonuclease. Recognizes the chi site generating a DNA molecule suitable for the initiation of homologous recombination. The AddB subunit has 5' -&gt; 3' nuclease activity but not helicase activity. The sequence is that of ATP-dependent helicase/deoxyribonuclease subunit B from Staphylococcus aureus (strain COL).